The chain runs to 346 residues: Acetyl-coenzyme A carboxylase carboxyl transferase subunit beta (346 aa).

The CoA carboxyltransferase N-terminal domain occupies 24-292; it reads LWIKCPKSGD…LPEVEPIAVA (269 aa). The segment covering 300–311 has biased composition (acidic residues); sequence AEAEAAPDEVVE. The segment at 300-346 is disordered; it reads AEAEAAPDEVVEVEAPAVDEIVEEKPAATKAKPRSKAKSKAAPKTDE. Basic residues predominate over residues 330-340; that stretch reads AKPRSKAKSKA.

The protein belongs to the AccD/PCCB family. As to quaternary structure, acetyl-CoA carboxylase is a heterohexamer composed of biotin carboxyl carrier protein (AccB), biotin carboxylase (AccC) and two subunits each of ACCase subunit alpha (AccA) and ACCase subunit beta (AccD).

The protein localises to the cytoplasm. The enzyme catalyses N(6)-carboxybiotinyl-L-lysyl-[protein] + acetyl-CoA = N(6)-biotinyl-L-lysyl-[protein] + malonyl-CoA. The protein operates within lipid metabolism; malonyl-CoA biosynthesis; malonyl-CoA from acetyl-CoA: step 1/1. In terms of biological role, component of the acetyl coenzyme A carboxylase (ACC) complex. Biotin carboxylase (BC) catalyzes the carboxylation of biotin on its carrier protein (BCCP) and then the CO(2) group is transferred by the transcarboxylase to acetyl-CoA to form malonyl-CoA. The chain is Acetyl-coenzyme A carboxylase carboxyl transferase subunit beta from Hirschia baltica (strain ATCC 49814 / DSM 5838 / IFAM 1418).